Here is a 90-residue protein sequence, read N- to C-terminus: N(2)-fixation sustaining protein CowN (90 aa).

This sequence belongs to the CowN family.

In terms of biological role, is required to sustain N(2)-dependent growth in the presence of low levels of carbon monoxide (CO). Probably acts by protecting the N(2) fixation ability of the nitrogenase complex, which is inactivated in the presence of CO. The protein is N(2)-fixation sustaining protein CowN of Methylocella silvestris (strain DSM 15510 / CIP 108128 / LMG 27833 / NCIMB 13906 / BL2).